The primary structure comprises 285 residues: Complex I assembly factor TIMMDC1, mitochondrial (285 aa).

A run of 4 helical transmembrane segments spans residues Ala80–Ala100, Arg137–Tyr159, Met165–Val185, and Leu188–Ala208. A disordered region spans residues Arg265 to His285. Polar residues predominate over residues Arg274–His285. Ser277 bears the Phosphoserine mark.

Belongs to the Tim17/Tim22/Tim23 family. Associates with the intermediate 315 kDa subcomplex of incompletely assembled complex I. Interacts with TMEM70.

It is found in the mitochondrion membrane. Chaperone protein involved in the assembly of the mitochondrial NADH:ubiquinone oxidoreductase complex (complex I). Participates in constructing the membrane arm of complex I. This is Complex I assembly factor TIMMDC1, mitochondrial from Mus musculus (Mouse).